A 286-amino-acid chain; its full sequence is Glycine--tRNA ligase alpha subunit (286 aa).

The protein belongs to the class-II aminoacyl-tRNA synthetase family. In terms of assembly, tetramer of two alpha and two beta subunits.

The protein resides in the cytoplasm. It carries out the reaction tRNA(Gly) + glycine + ATP = glycyl-tRNA(Gly) + AMP + diphosphate. The polypeptide is Glycine--tRNA ligase alpha subunit (Thermotoga sp. (strain RQ2)).